The primary structure comprises 127 residues: Methylglyoxal synthase (127 aa).

The MGS-like domain occupies 1-127 (MEGQRCIALI…ENLIDFNSAD (127 aa)). Substrate-binding positions include His12, Lys16, 38–41 (TGTT), and 59–60 (SG). Asp65 serves as the catalytic Proton donor/acceptor. A substrate-binding site is contributed by His92.

It belongs to the methylglyoxal synthase family.

The catalysed reaction is dihydroxyacetone phosphate = methylglyoxal + phosphate. Catalyzes the formation of methylglyoxal from dihydroxyacetone phosphate. The polypeptide is Methylglyoxal synthase (Agrobacterium fabrum (strain C58 / ATCC 33970) (Agrobacterium tumefaciens (strain C58))).